Consider the following 506-residue polypeptide: Phenylacetaldehyde synthase (506 aa).

Proline 101, histidine 202, and histidine 317 together coordinate L-phenylalanine. Lysine 318 is modified (N6-(pyridoxal phosphate)lysine).

It belongs to the group II decarboxylase family. As to quaternary structure, homotetramer. It depends on pyridoxal 5'-phosphate as a cofactor. Highly expressed in corolla limbs and at lower levels in corolla tubes and ovaries.

The enzyme catalyses L-phenylalanine + O2 + H2O + H(+) = 2-phenylacetaldehyde + H2O2 + NH4(+) + CO2. Bifunctional enzyme that catalyzes the decarboxylation of L-phenylalanine to 2-phenylethylamine, which is then oxidized to form 2-phenylacetaldehyde, a constituent of floral scent. 2-phenylacetaldehyde is a precursor of 2-phenylethanol, another constituent of floral scent. The protein is Phenylacetaldehyde synthase of Petunia hybrida (Petunia).